The primary structure comprises 356 residues: cGAMP-activated phospholipase (356 aa).

Residues 15 to 206 form the PNPLA domain; the sequence is LSLNGGGARG…VANNPSYIGL (192 aa). The GXGXXG motif lies at 19 to 24; the sequence is GGGARG. The GXSXG motif lies at 58 to 62; sequence GTSIG. Ser60 (nucleophile) is an active-site residue. The active-site Proton acceptor is Asp193. Positions 193–195 match the DGA/G motif; it reads DGG.

This sequence belongs to the patatin family.

It carries out the reaction a 1,2-diacyl-sn-glycero-3-phosphocholine + H2O = a 2-acyl-sn-glycero-3-phosphocholine + a fatty acid + H(+). The enzyme catalyses 1,2-di-(9Z-octadecenoyl)-sn-glycero-3-phosphoethanolamine + 2 H2O = sn-glycero-3-phosphoethanolamine + 2 (9Z)-octadecenoate + 2 H(+). Phospholipase activity is specifically activated upon 3',3'-cGAMP binding, which is produced by the cognate cyclic nucleotide synthase encoded in the same operon. In terms of biological role, effector phospholipase of a CBASS antiviral system. CBASS (cyclic oligonucleotide-based antiphage signaling system) provides immunity against bacteriophages. The CD-NTase protein (DncV) synthesizes cyclic nucleotides in response to infection; these serve as specific second messenger signals. The signals activate a diverse range of effectors, leading to bacterial cell death and thus abortive phage infection. A type II-A(GA) CBASS system. Phospholipase that is activated upon binding to the cyclic dinucleotide (CDN) second messenger 3',3'-cyclic GMP-AMP (cGAMP). Degrades phospholipids in the cell membrane. Its function is as follows. Protects E.coli against phage infection. When capV and dncV are introduced in E.coli MG1655 there is 1000-fold protection against phage P1; protection against other phage (T2, T4, T5, T6 and lambda-vir) requires the 2 subsequent genes (cap2 and cap3). Upon P1 phage infection the activating molecule is produced between 30 and 40 minutes. Activation leads to bacterial cell lysis and death, which occurs before the phage has finished its replication cycle, thus protecting non-infected bacteria by aborting the phage infection and preventing its propagation. In another paper the capV-dncV-cap2-cap3 operon gives 10(4)-10(5)-fold protection against phages lambda, T2, T4 and T6, about 1000-fold protection against P1 and 10-fold protection against T5. The polypeptide is cGAMP-activated phospholipase (Escherichia coli (strain TW11681)).